The sequence spans 151 residues: Myosin light polypeptide 6 (151 aa).

The residue at position 2 (cysteine 2) is an N-acetylcysteine. Residues 7-42 (DQTAEFKEAFQLFDRTGDGKILYSQCGDVMRALGQN) form the EF-hand 1 domain. Serine 57 carries the phosphoserine modification. Residue lysine 81 is modified to N6-acetyllysine. Positions 84-119 (GTYEDYVEGLRVFDKEGNGTVMGAEIRHVLVTLGEK) constitute an EF-hand 2 domain.

In terms of assembly, myosin is a hexamer of 2 heavy chains and 4 light chains. Interacts with SPATA6.

Its function is as follows. Regulatory light chain of myosin. Does not bind calcium. The polypeptide is Myosin light polypeptide 6 (MYL6) (Bos taurus (Bovine)).